Reading from the N-terminus, the 201-residue chain is MPIELLPETPSQTAGPYVHIGLALEAAGNPTRDQEIWNRLAKPDAPGEHILLLGQVYDGNGHLVRDSFLEVWQADANGEYQDAYNLENAFNSFGRTATTFDAGEWTLHTVKPGVVNNAAGVPMAPHINISLFARGINIHLHTRLYFDDEAQANAKCPVLNLIEQPQRRETLIAKRCEVDGKTAYRFDIRIQGEGETVFFDF.

Arg134 is a binding site for 3,4-dihydroxybenzoate.

It belongs to the intradiol ring-cleavage dioxygenase family. As to quaternary structure, the enzyme is an oligomer of 12 copies of the alpha and beta chains. Fe(3+) serves as cofactor.

It catalyses the reaction 3,4-dihydroxybenzoate + O2 = 3-carboxy-cis,cis-muconate + 2 H(+). It functions in the pathway aromatic compound metabolism; beta-ketoadipate pathway; 3-carboxy-cis,cis-muconate from 3,4-dihydroxybenzoate: step 1/1. In terms of biological role, plays an essential role in the utilization of numerous aromatic and hydroaromatic compounds via the beta-ketoadipate pathway. The sequence is that of Protocatechuate 3,4-dioxygenase alpha chain (pcaG) from Pseudomonas putida (Arthrobacter siderocapsulatus).